Here is a 254-residue protein sequence, read N- to C-terminus: Receptor expression-enhancing protein 2 (254 aa).

2 helical membrane passes run Met-1–Tyr-21 and Tyr-35–Thr-55. Phosphoserine is present on Ser-152. Positions Ala-164–Ala-254 are disordered. Residues Ser-195–Asp-204 show a composition bias toward polar residues. Over residues Pro-205 to Pro-219 the composition is skewed to basic and acidic residues.

The protein belongs to the DP1 family. As to quaternary structure, interacts with odorant receptor proteins.

The protein localises to the membrane. In terms of biological role, required for endoplasmic reticulum (ER) network formation, shaping and remodeling. May enhance the cell surface expression of odorant receptors. The sequence is that of Receptor expression-enhancing protein 2 (REEP2) from Bos taurus (Bovine).